The sequence spans 380 residues: Kappa-type opioid receptor (380 aa).

Topologically, residues 1–57 (MESPIQIFRGEPGPTCAPSACLLPNSSSWFPNWAESDSNGSVGSEDQQLEPAHISPA) are extracellular. N-linked (GlcNAc...) asparagine glycosylation is found at N25 and N39. Residues 58–85 (IPVIITAVYSVVFVVGLVGNSLVMFVII) form a helical membrane-spanning segment. Over 86–95 (RYTKMKTATN) the chain is Cytoplasmic. A helical membrane pass occupies residues 96 to 119 (IYIFNLALADALVTTTMPFQSAVY). At 120 to 132 (LMNSWPFGDVLCK) the chain is on the extracellular side. C131 and C210 are disulfide-bonded. A helical membrane pass occupies residues 133–154 (IVISIDYYNMFTSIFTLTMMSV). At 155–173 (DRYIAVCHPVKALDFRTPL) the chain is on the cytoplasmic side. A helical transmembrane segment spans residues 174-196 (KAKIINICIWLLASSVGISAIVL). Residues 197-222 (GGTKVREDVDVIECSLQFPDDEYSWW) lie on the Extracellular side of the membrane. Residues 223 to 247 (DLFMKICVFVFAFVIPVLIIIVCYT) form a helical membrane-spanning segment. Topologically, residues 248–274 (LMILRLKSVRLLSGSREKDRNLRRITK) are cytoplasmic. Residues 275-296 (LVLVVVAVFIICWTPIHIFILV) traverse the membrane as a helical segment. The Extracellular segment spans residues 297–311 (EALGSTSHSTAVLSS). A helical membrane pass occupies residues 312–333 (YYFCIALGYTNSSLNPVLYAFL). At 334-380 (DENFKRCFRDFCFPIKMRMERQSTNRVRNTVQDPASMRDVGGMNKPV) the chain is on the cytoplasmic side. The S-palmitoyl cysteine moiety is linked to residue C345.

Belongs to the G-protein coupled receptor 1 family. Interacts with NHERF1. Interacts with GABARAPL1.

Its subcellular location is the cell membrane. Functionally, G-protein coupled opioid receptor that functions as a receptor for endogenous alpha-neoendorphins and dynorphins, but has low affinity for beta-endorphins. Also functions as a receptor for various synthetic opioids and for the psychoactive diterpene salvinorin A. Ligand binding causes a conformation change that triggers signaling via guanine nucleotide-binding proteins (G proteins) and modulates the activity of down-stream effectors, such as adenylate cyclase. Signaling leads to the inhibition of adenylate cyclase activity. Inhibits neurotransmitter release by reducing calcium ion currents and increasing potassium ion conductance. Plays a role in the perception of pain. Plays a role in mediating reduced physical activity upon treatment with synthetic opioids. Plays a role in the regulation of salivation in response to synthetic opioids. May play a role in arousal and regulation of autonomic and neuroendocrine functions. This is Kappa-type opioid receptor (Oprk1) from Rattus norvegicus (Rat).